The primary structure comprises 538 residues: Putative outer membrane porin BglH (538 aa).

Positions Met1–Ala25 are cleaved as a signal peptide.

This sequence belongs to the porin LamB (TC 1.B.3) family.

The protein localises to the cell outer membrane. In terms of biological role, may be a sugar porin with a broad carbohydrate specificity. The chain is Putative outer membrane porin BglH (bglH) from Escherichia coli (strain UTI89 / UPEC).